A 623-amino-acid polypeptide reads, in one-letter code: Oviduct-specific glycoprotein (623 aa).

A signal peptide spans 1–21; it reads MWKLLLWVGLVLVLKHHDGAA. The 364-residue stretch at 22–385 folds into the GH18 domain; sequence HKLVCYFTNW…YVMNDILVRA (364 aa). A disulfide bridge connects residues cysteine 26 and cysteine 51. Chitin contacts are provided by residues 71 to 72, 98 to 101, tyrosine 142, 211 to 214, and tryptophan 355; these read LQ, GGWN, and LSYD. 2 N-linked (GlcNAc...) asparagine glycosylation sites follow: asparagine 402 and asparagine 441. 2 disordered regions span residues 539–558 and 594–623; these read LTPV…VSPG and RKIS…PQDG. Positions 613–623 are enriched in polar residues; the sequence is TSETGTHPQDG.

The protein belongs to the glycosyl hydrolase 18 family. As to expression, oviduct.

The protein localises to the cytoplasmic vesicle. The protein resides in the secretory vesicle. In terms of biological role, binds to oocyte zona pellucida in vivo. May play a role in the fertilization process and/or early embryonic development. In Papio anubis (Olive baboon), this protein is Oviduct-specific glycoprotein (OVGP1).